We begin with the raw amino-acid sequence, 182 residues long: Nucleosome assembly protein 1-like 5 (182 aa).

The tract at residues 1 to 71 is disordered; sequence MADSENQGPA…APKPKNDFIE (71 aa). 2 stretches are compositionally biased toward low complexity: residues 7–21 and 28–49; these read QGPA…AAEA and AEGG…SAAG. Residues 81–107 adopt a coiled-coil conformation; sequence VLALKKLQKRCDKIEAKFDKEFQALEK. Residues 134-182 form a disordered region; that stretch reads LEGEEEEEEEYEDDEEEGEDEEEEEAAAEAAAGAKHDDAHAEMPDDAKK. The segment covering 135-160 has biased composition (acidic residues); the sequence is EGEEEEEEEYEDDEEEGEDEEEEEAA. The segment covering 167–182 has biased composition (basic and acidic residues); it reads AKHDDAHAEMPDDAKK.

This sequence belongs to the nucleosome assembly protein (NAP) family. In terms of tissue distribution, predominantly expressed in brain.

It is found in the nucleus. The sequence is that of Nucleosome assembly protein 1-like 5 (NAP1L5) from Homo sapiens (Human).